The sequence spans 290 residues: uncharacterized protein (290 aa).

NAD(+)-binding positions include 7-21 and threonine 100; that span reads AVFG…MAQN. Lysine 175 is a catalytic residue. Lysine 243 is a binding site for NAD(+).

This sequence belongs to the HIBADH-related family.

This is an uncharacterized protein from Synechocystis sp. (strain ATCC 27184 / PCC 6803 / Kazusa).